We begin with the raw amino-acid sequence, 570 residues long: Urease subunit alpha (570 aa).

Positions 131–570 constitute a Urease domain; that stretch reads GGFDAHIHFI…LPMAQRYFLF (440 aa). Ni(2+) is bound by residues histidine 136, histidine 138, and lysine 219. Lysine 219 carries the N6-carboxylysine modification. Histidine 221 is a substrate binding site. Ni(2+) contacts are provided by histidine 248 and histidine 274. Histidine 322 functions as the Proton donor in the catalytic mechanism. Ni(2+) is bound at residue aspartate 362.

It belongs to the metallo-dependent hydrolases superfamily. Urease alpha subunit family. As to quaternary structure, heterotrimer of UreA (gamma), UreB (beta) and UreC (alpha) subunits. Three heterotrimers associate to form the active enzyme. Ni cation is required as a cofactor. Post-translationally, carboxylation allows a single lysine to coordinate two nickel ions.

Its subcellular location is the cytoplasm. It catalyses the reaction urea + 2 H2O + H(+) = hydrogencarbonate + 2 NH4(+). It functions in the pathway nitrogen metabolism; urea degradation; CO(2) and NH(3) from urea (urease route): step 1/1. The chain is Urease subunit alpha from Mesorhizobium japonicum (strain LMG 29417 / CECT 9101 / MAFF 303099) (Mesorhizobium loti (strain MAFF 303099)).